Consider the following 113-residue polypeptide: Hydrogenase maturation factor HypA (113 aa).

A Ni(2+)-binding site is contributed by His-2. Residues Cys-73, Cys-76, Cys-89, and Cys-92 each contribute to the Zn(2+) site.

It belongs to the HypA/HybF family.

Its function is as follows. Involved in the maturation of [NiFe] hydrogenases. Required for nickel insertion into the metal center of the hydrogenase. The protein is Hydrogenase maturation factor HypA of Azorhizobium caulinodans (strain ATCC 43989 / DSM 5975 / JCM 20966 / LMG 6465 / NBRC 14845 / NCIMB 13405 / ORS 571).